The sequence spans 509 residues: Group 3 secretory phospholipase A2 (509 aa).

The signal sequence occupies residues Met1–Gly19. The interval Glu123–Arg149 is disordered. The segment at Gly150–Thr291 is phospholipase A2-like. Ca(2+) is bound by residues Trp158, Gly160, and Gly162. Intrachain disulfides connect Cys159-Cys181, Cys180-Cys220, Cys187-Cys213, and Cys211-Cys244. Asn167 carries an N-linked (GlcNAc...) asparagine glycan. His184 is a catalytic residue. Asp185 is a binding site for Ca(2+). Asp214 is a catalytic residue. N-linked (GlcNAc...) asparagine glycosylation occurs at Asn280. Residues Trp283–Pro354 are disordered. A compositionally biased stretch (low complexity) spans Ser284–Ser296. Residues Pro302 to Ser322 show a composition bias toward basic residues. 3 N-linked (GlcNAc...) asparagine glycosylation sites follow: Asn325, Asn396, and Asn439. The segment at Gln458–Gly482 is disordered. Positions Gln463–Gln473 are enriched in basic and acidic residues.

Belongs to the phospholipase A2 family. Requires Ca(2+) as cofactor. N-glycosylation does not affect the catalytic activity, but is required for proper secretion. A nonglycosylated form is observed in several cell types. Post-translationally, in several cell types, the N- and C-termini are cleaved off. In terms of tissue distribution, expressed in kidney, heart, liver, and skeletal muscle. Also present in placenta and peripheral blood leukocytes. Not detected in colon, thymus, spleen and small intestine. In lung, expressed in bronchial epithelial cells and alveolar macrophages, but scarcely detected in alveolar epithelium, arterial walls and interstitial fibroblasts (at protein level). In joints of osteoarthritis and rheumatoid arthritis, expressed in endothelial cells (at protein level). In normal heart, detected in some vessels. In myocardial tissues with acute infarction, expressed in vascular endothelial cells adjacent to cardiomyocytes and those in lesions with granulation. Expression in cardiomyocytes is scarce (at protein level). In uterus, breast and colon cancers, detected in tumor cells and neighboring microvascular endothelium, but not in normal glandular tissues (at protein level). Expressed in dermal resting mast cells (at protein level) and pulmonary mast cells. Expressed in neuronal fibers (at protein level). Highly expressed in dorsal root ganglia neurons (at protein level). Expressed in Purkinje cells in cerebellum (at protein level). In stomach is preferentially expressed in neuronal fibers and in microvascular endothelium. Sparsely expressed in normal aorta (at protein level). Highly expressed in macrophages and smooth muscle cells in aorta with atheroma.

The protein localises to the secreted. Its subcellular location is the cell membrane. It is found in the cytoplasm. The protein resides in the cytoskeleton. It localises to the microtubule organizing center. The protein localises to the centrosome. Its subcellular location is the centriole. It is found in the recycling endosome. The enzyme catalyses a 1,2-diacyl-sn-glycero-3-phosphocholine + H2O = a 1-acyl-sn-glycero-3-phosphocholine + a fatty acid + H(+). It carries out the reaction 1-hexadecanoyl-2-(9Z,12Z-octadecadienoyl)-sn-glycero-3-phosphocholine + H2O = (9Z,12Z)-octadecadienoate + 1-hexadecanoyl-sn-glycero-3-phosphocholine + H(+). The catalysed reaction is 1-hexadecanoyl-2-(5Z,8Z,11Z,14Z-eicosatetraenoyl)-sn-glycero-3-phosphocholine + H2O = 1-hexadecanoyl-sn-glycero-3-phosphocholine + (5Z,8Z,11Z,14Z)-eicosatetraenoate + H(+). It catalyses the reaction 1-hexadecanoyl-2-(9Z,12Z-octadecadienoyl)-sn-glycero-3-phosphoethanolamine + H2O = 1-hexadecanoyl-sn-glycero-3-phosphoethanolamine + (9Z,12Z)-octadecadienoate + H(+). The enzyme catalyses 1-hexadecanoyl-2-(5Z,8Z,11Z,14Z-eicosatetraenoyl)-sn-glycero-3-phosphoethanolamine + H2O = 1-hexadecanoyl-sn-glycero-3-phosphoethanolamine + (5Z,8Z,11Z,14Z)-eicosatetraenoate + H(+). Its activity is regulated as follows. Arachidonic acid release is markedly increased by glypican, a glycosylphosphatidylinositol-anchored heparan sulfate proteoglycan. Secretory calcium-dependent phospholipase A2 that primarily targets extracellular phospholipids. Hydrolyzes the ester bond of the fatty acyl group attached at sn-2 position of phospholipids without apparent head group selectivity. Contributes to phospholipid remodeling of low-density lipoprotein (LDL) and high-density lipoprotein (HDL) particles. Hydrolyzes LDL phospholipids releasing unsaturated fatty acids that regulate macrophage differentiation toward foam cells. May act in an autocrine and paracrine manner. Secreted by immature mast cells, acts on nearby fibroblasts upstream to PTDGS to synthesize prostaglandin D2 (PGD2), which in turn promotes mast cell maturation and degranulation via PTGDR. Secreted by epididymal epithelium, acts on immature sperm cells within the duct, modulating the degree of unsaturation of the fatty acyl components of phosphatidylcholines required for acrosome assembly and sperm cell motility. Facilitates the replacement of fatty acyl chains in phosphatidylcholines in sperm membranes from omega-6 and omega-9 to omega-3 polyunsaturated fatty acids (PUFAs). Coupled to lipoxygenase pathway, may process omega-6 PUFAs to generate oxygenated lipid mediators in the male reproductive tract. At pericentrosomal preciliary compartment, negatively regulates ciliogenesis likely by regulating endocytotic recycling of ciliary membrane protein. Coupled to cyclooxygenase pathway provides arachidonate to generate prostaglandin E2 (PGE2), a potent immunomodulatory lipid in inflammation and tumorigenesis. At colonic epithelial barrier, preferentially hydrolyzes phospholipids having arachidonate and docosahexaenoate at sn-2 position, contributing to the generation of oxygenated metabolites involved in colonic stem cell homeostasis. Releases C16:0 and C18:0 lysophosphatidylcholine subclasses from neuron plasma membranes and promotes neurite outgrowth and neuron survival. The sequence is that of Group 3 secretory phospholipase A2 from Homo sapiens (Human).